A 652-amino-acid chain; its full sequence is DNA ligase (652 aa).

Residues 29 to 33, 78 to 79, and Glu-107 contribute to the NAD(+) site; these read DSDYD and SL. Lys-109 functions as the N6-AMP-lysine intermediate in the catalytic mechanism. Residues Arg-130, Glu-164, Lys-278, and Lys-302 each contribute to the NAD(+) site. 4 residues coordinate Zn(2+): Cys-395, Cys-398, Cys-413, and Cys-418. The region spanning 577–652 is the BRCT domain; that stretch reads NSDAALFGLT…IEDEDWLRQL (76 aa).

Belongs to the NAD-dependent DNA ligase family. LigA subfamily. Mg(2+) serves as cofactor. The cofactor is Mn(2+).

The catalysed reaction is NAD(+) + (deoxyribonucleotide)n-3'-hydroxyl + 5'-phospho-(deoxyribonucleotide)m = (deoxyribonucleotide)n+m + AMP + beta-nicotinamide D-nucleotide.. Its function is as follows. DNA ligase that catalyzes the formation of phosphodiester linkages between 5'-phosphoryl and 3'-hydroxyl groups in double-stranded DNA using NAD as a coenzyme and as the energy source for the reaction. It is essential for DNA replication and repair of damaged DNA. The sequence is that of DNA ligase from Streptococcus pyogenes serotype M12 (strain MGAS2096).